Consider the following 346-residue polypeptide: tRNA N6-adenosine threonylcarbamoyltransferase (346 aa).

The Fe cation site is built by His-111 and His-115. Substrate contacts are provided by residues 134–138, Asp-167, Gly-180, and Asn-277; that span reads LVSGG. Asp-305 is a binding site for Fe cation.

This sequence belongs to the KAE1 / TsaD family. Fe(2+) serves as cofactor.

Its subcellular location is the cytoplasm. It catalyses the reaction L-threonylcarbamoyladenylate + adenosine(37) in tRNA = N(6)-L-threonylcarbamoyladenosine(37) in tRNA + AMP + H(+). Functionally, required for the formation of a threonylcarbamoyl group on adenosine at position 37 (t(6)A37) in tRNAs that read codons beginning with adenine. Is involved in the transfer of the threonylcarbamoyl moiety of threonylcarbamoyl-AMP (TC-AMP) to the N6 group of A37, together with TsaE and TsaB. TsaD likely plays a direct catalytic role in this reaction. The chain is tRNA N6-adenosine threonylcarbamoyltransferase from Bordetella bronchiseptica (strain ATCC BAA-588 / NCTC 13252 / RB50) (Alcaligenes bronchisepticus).